A 430-amino-acid chain; its full sequence is Histidine--tRNA ligase (430 aa).

It belongs to the class-II aminoacyl-tRNA synthetase family. In terms of assembly, homodimer.

It localises to the cytoplasm. It catalyses the reaction tRNA(His) + L-histidine + ATP = L-histidyl-tRNA(His) + AMP + diphosphate + H(+). This is Histidine--tRNA ligase from Anaplasma marginale (strain St. Maries).